A 254-amino-acid chain; its full sequence is Cell division protein FtsQ (254 aa).

The Cytoplasmic segment spans residues 1–27; that stretch reads MNILKRKTPQNIRFGEQKPKYYFHIRA. The chain crosses the membrane as a helical span at residues 28–48; it reads FAVLLGVFFLLGVYFNWQSIL. Residues 49–254 are Periplasmic-facing; it reads EKMDDKPISA…AGAAVGMVDR (206 aa). The POTRA domain occupies 54 to 124; the sequence is KPISAFALVG…NRLSIWVSEY (71 aa).

This sequence belongs to the FtsQ/DivIB family. FtsQ subfamily. In terms of assembly, part of a complex composed of FtsB, FtsL and FtsQ.

It localises to the cell inner membrane. Essential cell division protein. May link together the upstream cell division proteins, which are predominantly cytoplasmic, with the downstream cell division proteins, which are predominantly periplasmic. May control correct divisome assembly. This Haemophilus influenzae (strain ATCC 51907 / DSM 11121 / KW20 / Rd) protein is Cell division protein FtsQ.